The following is a 79-amino-acid chain: Large ribosomal subunit protein bL28 (79 aa).

The protein belongs to the bacterial ribosomal protein bL28 family.

In Blochmanniella floridana, this protein is Large ribosomal subunit protein bL28.